We begin with the raw amino-acid sequence, 335 residues long: Nuclear envelope-associated protein 2 (335 aa).

2 coiled-coil regions span residues 55–85 (RKEAEKKAKNMEMEICKLQKKLEDRNCELVA) and 125–260 (CSVL…LKKK). The Bipartite nuclear localization signal motif lies at 239–260 (KTKELESQLERQRRADQELKKK). The chain crosses the membrane as a helical span at residues 312–329 (FWDTSGFKIVVSMSMLIL).

As to quaternary structure, forms homomers and heteromers with NEAP1 and NEAP3. Interacts with SUN1 and SUN2.

The protein localises to the nucleus inner membrane. The protein resides in the nucleus. Its subcellular location is the nucleoplasm. The chain is Nuclear envelope-associated protein 2 from Arabidopsis thaliana (Mouse-ear cress).